The chain runs to 172 residues: Small ribosomal subunit protein uS5 (172 aa).

Residues 17–80 (LREKMISVNR…EQARRNMFKV (64 aa)) enclose the S5 DRBM domain.

This sequence belongs to the universal ribosomal protein uS5 family. In terms of assembly, part of the 30S ribosomal subunit. Contacts proteins S4 and S8.

Its function is as follows. With S4 and S12 plays an important role in translational accuracy. Located at the back of the 30S subunit body where it stabilizes the conformation of the head with respect to the body. This Burkholderia orbicola (strain AU 1054) protein is Small ribosomal subunit protein uS5.